The chain runs to 208 residues: Sec-independent protein translocase protein TatB (208 aa).

A helical membrane pass occupies residues 1–21 (MFDIGVGELTLIAVVALVVLG). Positions 188–208 (DAGTPAASMPSAPAKIQEKQP) are disordered.

This sequence belongs to the TatB family. The Tat system comprises two distinct complexes: a TatABC complex, containing multiple copies of TatA, TatB and TatC subunits, and a separate TatA complex, containing only TatA subunits. Substrates initially bind to the TatABC complex, which probably triggers association of the separate TatA complex to form the active translocon.

It is found in the cell inner membrane. Functionally, part of the twin-arginine translocation (Tat) system that transports large folded proteins containing a characteristic twin-arginine motif in their signal peptide across membranes. Together with TatC, TatB is part of a receptor directly interacting with Tat signal peptides. TatB may form an oligomeric binding site that transiently accommodates folded Tat precursor proteins before their translocation. The sequence is that of Sec-independent protein translocase protein TatB from Xanthomonas axonopodis pv. citri (strain 306).